Consider the following 551-residue polypeptide: Eukaryotic translation initiation factor 3 subunit D-2 (551 aa).

The segment at 91-154 is disordered; the sequence is TKPYQRGRYR…RNTQNMGRRF (64 aa). Positions 95–113 are enriched in basic residues; it reads QRGRYRPNMRNNVRSRGRT. Residues 121–136 are compositionally biased toward low complexity; that stretch reads ASLGGSTAGGATASTT. The tract at residues 290-304 is RNA gate; that stretch reads QFDLLTVNETSVEPP. Positions 527 to 551 are disordered; it reads PENAFDSDGDEEEESSDPLSNSNDN. The segment covering 531–542 has biased composition (acidic residues); the sequence is FDSDGDEEEESS.

The protein belongs to the eIF-3 subunit D family. In terms of assembly, component of the eukaryotic translation initiation factor 3 (eIF-3) complex. The eIF-3 complex interacts with pix.

It is found in the cytoplasm. Functionally, mRNA cap-binding component of the eukaryotic translation initiation factor 3 (eIF-3) complex, which is involved in protein synthesis of a specialized repertoire of mRNAs and, together with other initiation factors, stimulates binding of mRNA and methionyl-tRNAi to the 40S ribosome. The eIF-3 complex specifically targets and initiates translation of a subset of mRNAs involved in cell proliferation. In the eIF-3 complex, eif3d specifically recognizes and binds the 7-methylguanosine cap of a subset of mRNAs. The chain is Eukaryotic translation initiation factor 3 subunit D-2 from Drosophila melanogaster (Fruit fly).